We begin with the raw amino-acid sequence, 83 residues long: Small ribosomal subunit protein uS17 (83 aa).

Belongs to the universal ribosomal protein uS17 family. As to quaternary structure, part of the 30S ribosomal subunit.

One of the primary rRNA binding proteins, it binds specifically to the 5'-end of 16S ribosomal RNA. This is Small ribosomal subunit protein uS17 from Campylobacter curvus (strain 525.92).